The primary structure comprises 401 residues: MNGLDDENQIDERDHYTDDGDYEIDIDSMNMFKSLYYEMMAYFSDLQMHLGEHLMAIDWDMKCKSIAEPVGNCLTALFYIIRLLQDTLLSNYKDVYVSTEAFDLSKSTTLQEFPFLIRFVEVSKTKNLQNAKYIKKKTFMFYFDKLLLFLMILILSTNAYISWTFIWRNFKTYSLLYVVDRPNSKNVTKCSRTDLDQSYMENVSYGSYWTMLSYYIRNFRKKDDLEDEITTVKQKTPNVNEKDYYYQLKKWSPSKFLTSLFCSFSPTCLVFLILSDVSFTTSIAVILHQFIFKYVVFEGYESRINDESIIHSAMISEINQKFVEPRLSKKVQDAKIDATPEGKVYRTEFFPSLTNCKSNLFNRHDLKGRSITESYNDRIKEFEIVTNTNNETHNVIKVVKK.

The next 2 helical transmembrane spans lie at 146–166 (LLLF…WTFI) and 256–274 (FLTS…FLIL).

The protein belongs to the NUR1 family.

It is found in the nucleus membrane. Functionally, member of a perinuclear network that controls recombination at multiple loci to maintain genome stability. Required for rDNA repeat stability. This Vanderwaltozyma polyspora (strain ATCC 22028 / DSM 70294 / BCRC 21397 / CBS 2163 / NBRC 10782 / NRRL Y-8283 / UCD 57-17) (Kluyveromyces polysporus) protein is Nuclear rim protein 1 (NUR1).